The following is a 138-amino-acid chain: Small ribosomal subunit protein uS11c (138 aa).

Positions 1 to 22 (MTKPIPRIGSRRSGRIGSRKAG) are disordered. Residues 9–22 (GSRRSGRIGSRKAG) show a composition bias toward basic residues.

Belongs to the universal ribosomal protein uS11 family. As to quaternary structure, part of the 30S ribosomal subunit.

Its subcellular location is the plastid. The protein localises to the chloroplast. This is Small ribosomal subunit protein uS11c from Piper cenocladum (Ant piper).